The chain runs to 595 residues: MHRYRSHTCAALRKTDVGSNVRLSGWVHRVRDHGGILFIDLRDHYGITQIVADPDSPAFKVAETVRGEWVIRVDGEVKARADDAVNTNLPTGEVEIFATEIEVLSPAKELPLPVFGEPDYPEDIRLKYRFLDLRRETLHKNIMSRTKIIAAMRRRMTEIGFNEFSTPILTASSPEGARDFLVPSRIHPGKFYALPQAPQQYKQLLMVAGFDRYFQIAPCFRDEDPRADRLPGEFYQLDLEMSFVTQEEVWETMEPVMRGIFEEFAEGKPVTKVFRRIAYDDAIRTYGSDKPDLRNPIEMQAVTDHFAGSGFKVFANMIANDAKVEVWAIPAKTGGSRAFCDRMNSWAQSEGQPGLGYIFWRKEGDKLEGAGPIAKNIGEERTEAIRKQMGLEDGDACFFVAGLPSKFYKFAGDARTRAGEELNLVDRDRFELAWIIDFPFYEWDEDNKKIDFAHNPFSLPQGGMDALENMDPLEIKAYQYDLVCNGFEIASGSIRNQLPEVMVKAFEKVGLSQQDVEERFGGLYRAFQYGAPPHGGMAAGIDRVIMLLVGAKNLREISLFPMNQQALDLLMGAPSEVSPAQLRDLHVRLAPVQKS.

Glu-175 contributes to the L-aspartate binding site. An aspartate region spans residues 199–202 (QQYK). L-aspartate-binding residues include Arg-221 and His-454. Position 221–223 (221–223 (RDE)) interacts with ATP. ATP is bound at residue Glu-488. Arg-495 contacts L-aspartate. Residue 540 to 543 (GIDR) participates in ATP binding.

This sequence belongs to the class-II aminoacyl-tRNA synthetase family. Type 1 subfamily. In terms of assembly, homodimer.

It is found in the cytoplasm. The enzyme catalyses tRNA(Asx) + L-aspartate + ATP = L-aspartyl-tRNA(Asx) + AMP + diphosphate. Functionally, aspartyl-tRNA synthetase with relaxed tRNA specificity since it is able to aspartylate not only its cognate tRNA(Asp) but also tRNA(Asn). Reaction proceeds in two steps: L-aspartate is first activated by ATP to form Asp-AMP and then transferred to the acceptor end of tRNA(Asp/Asn). The polypeptide is Aspartate--tRNA(Asp/Asn) ligase (Brucella abortus (strain S19)).